A 446-amino-acid polypeptide reads, in one-letter code: UDP-N-acetylmuramoylalanine--D-glutamate ligase (446 aa).

Position 118-124 (118-124) interacts with ATP; it reads GSNGKST.

This sequence belongs to the MurCDEF family.

The protein localises to the cytoplasm. It catalyses the reaction UDP-N-acetyl-alpha-D-muramoyl-L-alanine + D-glutamate + ATP = UDP-N-acetyl-alpha-D-muramoyl-L-alanyl-D-glutamate + ADP + phosphate + H(+). It participates in cell wall biogenesis; peptidoglycan biosynthesis. In terms of biological role, cell wall formation. Catalyzes the addition of glutamate to the nucleotide precursor UDP-N-acetylmuramoyl-L-alanine (UMA). The sequence is that of UDP-N-acetylmuramoylalanine--D-glutamate ligase from Pseudoalteromonas translucida (strain TAC 125).